The chain runs to 136 residues: Histone H3.2 (136 aa).

The segment at 1–45 (MARTKQTARKSTGGKAPRKQLATKAARKSAPATGGVKKPHRYRPG) is disordered. Arginine 3 is modified (asymmetric dimethylarginine; by PRMT6; alternate). Arginine 3 is subject to Citrulline; alternate. Threonine 4 is subject to Phosphothreonine; by HASPIN and VRK1. Lysine 5 bears the Allysine; alternate mark. Position 5 is an N6,N6,N6-trimethyllysine; alternate (lysine 5). N6,N6-dimethyllysine; alternate is present on lysine 5. N6-(2-hydroxyisobutyryl)lysine; alternate is present on lysine 5. Lysine 5 is modified (N6-(beta-hydroxybutyryl)lysine; alternate). Lysine 5 is modified (N6-acetyllysine; alternate). Lysine 5 carries the N6-crotonyllysine; alternate modification. Residue lysine 5 is modified to N6-methyllysine; alternate. At glutamine 6 the chain carries 5-glutamyl dopamine; alternate. Glutamine 6 is modified (5-glutamyl serotonin; alternate). Phosphothreonine; by PKC is present on threonine 7. Residue arginine 9 is modified to Citrulline; alternate. Arginine 9 is subject to Symmetric dimethylarginine; by PRMT5; alternate. An N6,N6,N6-trimethyllysine; alternate modification is found at lysine 10. Position 10 is an N6,N6-dimethyllysine; alternate (lysine 10). Lysine 10 is subject to N6-(2-hydroxyisobutyryl)lysine; alternate. Lysine 10 is modified (N6-(beta-hydroxybutyryl)lysine; alternate). Residue lysine 10 is modified to N6-acetyllysine; alternate. Lysine 10 bears the N6-crotonyllysine; alternate mark. Lysine 10 carries the N6-methyllysine; alternate modification. Lysine 10 is subject to N6-lactoyllysine; alternate. ADP-ribosylserine; alternate is present on serine 11. At serine 11 the chain carries Phosphoserine; alternate; by AURKB, AURKC, RPS6KA3, RPS6KA4 and RPS6KA5. Threonine 12 bears the Phosphothreonine; by PKC mark. Residue lysine 15 is modified to N6-(2-hydroxyisobutyryl)lysine; alternate. Lysine 15 is subject to N6-(beta-hydroxybutyryl)lysine; alternate. Lysine 15 carries the N6-acetyllysine; alternate modification. Lysine 15 carries the N6-lactoyllysine; alternate modification. N6-glutaryllysine; alternate is present on lysine 15. Position 15 is an N6-succinyllysine; alternate (lysine 15). Citrulline; alternate is present on arginine 18. Arginine 18 carries the post-translational modification Asymmetric dimethylarginine; by CARM1; alternate. N6-(2-hydroxyisobutyryl)lysine; alternate occurs at positions 19 and 24. An N6-(beta-hydroxybutyryl)lysine; alternate mark is found at lysine 19 and lysine 24. N6-acetyllysine; alternate is present on residues lysine 19 and lysine 24. Residues lysine 19 and lysine 24 each carry the N6-crotonyllysine; alternate modification. Lysine 19 and lysine 24 each carry N6-methyllysine; alternate. N6-lactoyllysine; alternate is present on residues lysine 19 and lysine 24. N6-glutaryllysine; alternate occurs at positions 19 and 24. N6-butyryllysine; alternate is present on residues lysine 19 and lysine 24. The N6-decanoyllysine moiety is linked to residue lysine 19. A Citrulline modification is found at arginine 27. At lysine 28 the chain carries N6,N6,N6-trimethyllysine; alternate. Lysine 28 bears the N6,N6-dimethyllysine; alternate mark. N6-(2-hydroxyisobutyryl)lysine; alternate is present on lysine 28. At lysine 28 the chain carries N6-acetyllysine; alternate. An N6-crotonyllysine; alternate modification is found at lysine 28. An N6-methyllysine; alternate modification is found at lysine 28. Residue lysine 28 is modified to N6-lactoyllysine; alternate. Lysine 28 is subject to N6-glutaryllysine; alternate. Serine 29 is modified (ADP-ribosylserine; alternate). Serine 29 bears the Phosphoserine; alternate; by AURKB, AURKC and RPS6KA5 mark. Lysine 37 carries the post-translational modification N6,N6,N6-trimethyllysine; alternate. N6,N6-dimethyllysine; alternate is present on lysine 37. Position 37 is an N6-(2-hydroxyisobutyryl)lysine; alternate (lysine 37). Lysine 37 bears the N6-acetyllysine; alternate mark. At lysine 37 the chain carries N6-methyllysine; alternate. Lysine 38 is subject to N6-methyllysine. Tyrosine 42 is subject to Phosphotyrosine. Lysine 57 is subject to N6,N6,N6-trimethyllysine; alternate. The residue at position 57 (lysine 57) is an N6-(2-hydroxyisobutyryl)lysine; alternate. N6-(beta-hydroxybutyryl)lysine; alternate is present on lysine 57. Lysine 57 carries the N6-acetyllysine; alternate modification. N6-crotonyllysine; alternate is present on lysine 57. Lysine 57 bears the N6-lactoyllysine; alternate mark. Lysine 57 carries the N6-glutaryllysine; alternate modification. Lysine 57 carries the post-translational modification N6-succinyllysine; alternate. Lysine 57 is modified (N6-methyllysine; by EHMT2; alternate). Phosphoserine is present on serine 58. 2 positions are modified to N6-(2-hydroxyisobutyryl)lysine; alternate: lysine 65 and lysine 80. Residues lysine 65 and lysine 80 each carry the N6-methyllysine; alternate modification. Lysine 80 is modified (N6,N6,N6-trimethyllysine; alternate). Lysine 80 is modified (N6,N6-dimethyllysine; alternate). The residue at position 80 (lysine 80) is an N6-acetyllysine; alternate. Lysine 80 is subject to N6-lactoyllysine; alternate. Lysine 80 is subject to N6-glutaryllysine; alternate. N6-succinyllysine; alternate is present on lysine 80. Threonine 81 bears the Phosphothreonine mark. Serine 87 is subject to Phosphoserine. Threonine 108 carries the phosphothreonine modification. The S-palmitoyl cysteine moiety is linked to residue cysteine 111. N6-acetyllysine; alternate is present on residues lysine 116 and lysine 123. N6-glutaryllysine; alternate occurs at positions 116 and 123. Lysine 123 is subject to N6-(2-hydroxyisobutyryl)lysine; alternate. Lysine 123 is modified (N6-methyllysine; alternate). Lysine 123 carries the N6-succinyllysine; alternate modification.

The protein belongs to the histone H3 family. In terms of assembly, the nucleosome is a histone octamer containing two molecules each of H2A, H2B, H3 and H4 assembled in one H3-H4 heterotetramer and two H2A-H2B heterodimers. The octamer wraps approximately 147 bp of DNA. During nucleosome assembly the chaperone ASF1A interacts with the histone H3-H4 heterodimer (via C-terminus of H3); this interaction is direct. Interacts with DNAJC9, CHAF1A and CHAF1B. Interacts with NASP; NASP is a histone chaperone that stabilizes and maintains a soluble pool of Histone H3-H4 dimers. Post-translationally, acetylation is generally linked to gene activation. Acetylation on Lys-10 (H3K9ac) impairs methylation at Arg-9 (H3R8me2s). Acetylation on Lys-19 (H3K18ac) and Lys-24 (H3K24ac) favors methylation at Arg-18 (H3R17me). Acetylation at Lys-123 (H3K122ac) by EP300/p300 plays a central role in chromatin structure: localizes at the surface of the histone octamer and stimulates transcription, possibly by promoting nucleosome instability. Citrullination at Arg-9 (H3R8ci) and/or Arg-18 (H3R17ci) by PADI4 impairs methylation and represses transcription. In terms of processing, asymmetric dimethylation at Arg-18 (H3R17me2a) by CARM1 is linked to gene activation. Symmetric dimethylation at Arg-9 (H3R8me2s) by PRMT5 is linked to gene repression. Asymmetric dimethylation at Arg-3 (H3R2me2a) by PRMT6 is linked to gene repression and is mutually exclusive with H3 Lys-5 methylation (H3K4me2 and H3K4me3). H3R2me2a is present at the 3' of genes regardless of their transcription state and is enriched on inactive promoters, while it is absent on active promoters. Post-translationally, methylation at Lys-5 (H3K4me), Lys-37 (H3K36me) and Lys-80 (H3K79me) are linked to gene activation. Methylation at Lys-5 (H3K4me) facilitates subsequent acetylation of H3 and H4. Methylation at Lys-80 (H3K79me) is associated with DNA double-strand break (DSB) responses and is a specific target for TP53BP1. Methylation at Lys-10 (H3K9me) and Lys-28 (H3K27me) are linked to gene repression. Methylation at Lys-10 (H3K9me) is a specific target for HP1 proteins (CBX1, CBX3 and CBX5) and prevents subsequent phosphorylation at Ser-11 (H3S10ph) and acetylation of H3 and H4. Methylation at Lys-5 (H3K4me) and Lys-80 (H3K79me) require preliminary monoubiquitination of H2B at 'Lys-120'. Methylation at Lys-10 (H3K9me) and Lys-28 (H3K27me) are enriched in inactive X chromosome chromatin. Monomethylation at Lys-57 (H3K56me1) by EHMT2/G9A in G1 phase promotes interaction with PCNA and is required for DNA replication. Phosphorylated at Thr-4 (H3T3ph) by VRK1. Phosphorylated at Thr-4 (H3T3ph) by HASPIN during prophase and dephosphorylated during anaphase. Phosphorylation at Ser-11 (H3S10ph) by AURKB is crucial for chromosome condensation and cell-cycle progression during mitosis and meiosis. In addition phosphorylation at Ser-11 (H3S10ph) by RPS6KA4 and RPS6KA5 is important during interphase because it enables the transcription of genes following external stimulation, like mitogens, stress, growth factors or UV irradiation and result in the activation of genes, such as c-fos and c-jun. Phosphorylation at Ser-11 (H3S10ph), which is linked to gene activation, prevents methylation at Lys-10 (H3K9me) but facilitates acetylation of H3 and H4. Phosphorylation at Ser-11 (H3S10ph) by AURKB mediates the dissociation of HP1 proteins (CBX1, CBX3 and CBX5) from heterochromatin. Phosphorylation at Ser-11 (H3S10ph) is also an essential regulatory mechanism for neoplastic cell transformation. Phosphorylated at Ser-29 (H3S28ph) by MAP3K20 isoform 1, RPS6KA5 or AURKB during mitosis or upon ultraviolet B irradiation. Phosphorylation at Thr-7 (H3T6ph) by PRKCB is a specific tag for epigenetic transcriptional activation that prevents demethylation of Lys-5 (H3K4me) by LSD1/KDM1A. At centromeres, specifically phosphorylated at Thr-12 (H3T11ph) from prophase to early anaphase, by DAPK3 and PKN1. Phosphorylation at Thr-12 (H3T11ph) by PKN1 or isoform M2 of PKM (PKM2) is a specific tag for epigenetic transcriptional activation that promotes demethylation of Lys-10 (H3K9me) by KDM4C/JMJD2C. Phosphorylation at Tyr-42 (H3Y41ph) by JAK2 promotes exclusion of CBX5 (HP1 alpha) from chromatin. In terms of processing, monoubiquitinated by RAG1 in lymphoid cells, monoubiquitination is required for V(D)J recombination. Ubiquitinated by the CUL4-DDB-RBX1 complex in response to ultraviolet irradiation. This may weaken the interaction between histones and DNA and facilitate DNA accessibility to repair proteins. Post-translationally, lysine deamination at Lys-5 (H3K4all) to form allysine is mediated by LOXL2. Allysine formation by LOXL2 only takes place on H3K4me3 and results in gene repression. Crotonylation (Kcr) is specifically present in male germ cells and marks testis-specific genes in post-meiotic cells, including X-linked genes that escape sex chromosome inactivation in haploid cells. Crotonylation marks active promoters and enhancers and confers resistance to transcriptional repressors. It is also associated with post-meiotically activated genes on autosomes. In terms of processing, butyrylation of histones marks active promoters and competes with histone acetylation. It is present during late spermatogenesis. Post-translationally, succinylation at Lys-80 (H3K79succ) by KAT2A takes place with a maximum frequency around the transcription start sites of genes. It gives a specific tag for epigenetic transcription activation. Desuccinylation at Lys-123 (H3K122succ) by SIRT7 in response to DNA damage promotes chromatin condensation and double-strand breaks (DSBs) repair. Serine ADP-ribosylation by PARP1 or PARP2 constitutes the primary form of ADP-ribosylation of proteins in response to DNA damage. Serine ADP-ribosylation at Ser-11 (H3S10ADPr) promotes recruitment of CHD1L. H3S10ADPr is mutually exclusive with phosphorylation at Ser-11 (H3S10ph) and impairs acetylation at Lys-10 (H3K9ac). In terms of processing, serotonylated by TGM2 at Gln-6 (H3Q5ser) during serotonergic neuron differentiation. H3Q5ser is associated with trimethylation of Lys-5 (H3K4me3) and enhances general transcription factor IID (TFIID) complex-binding to H3K4me3, thereby facilitating transcription. Post-translationally, dopaminylated by TGM2 at Gln-6 (H3Q5dop) in ventral tegmental area (VTA) neurons. H3Q5dop mediates neurotransmission-independent role of nuclear dopamine by regulating relapse-related transcriptional plasticity in the reward system. Lactylated in macrophages by EP300/P300 by using lactoyl-CoA directly derived from endogenous or exogenous lactate, leading to stimulates gene transcription.

It localises to the nucleus. The protein localises to the chromosome. In terms of biological role, core component of nucleosome. Nucleosomes wrap and compact DNA into chromatin, limiting DNA accessibility to the cellular machineries which require DNA as a template. Histones thereby play a central role in transcription regulation, DNA repair, DNA replication and chromosomal stability. DNA accessibility is regulated via a complex set of post-translational modifications of histones, also called histone code, and nucleosome remodeling. The chain is Histone H3.2 from Cricetulus longicaudatus (Long-tailed dwarf hamster).